The chain runs to 156 residues: 6,7-dimethyl-8-ribityllumazine synthase (156 aa).

Residues Phe23, 57 to 59 (SFE), and 81 to 83 (AVI) contribute to the 5-amino-6-(D-ribitylamino)uracil site. 86–87 (GT) lines the (2S)-2-hydroxy-3-oxobutyl phosphate pocket. His89 acts as the Proton donor in catalysis. Tyr114 contacts 5-amino-6-(D-ribitylamino)uracil. Arg128 serves as a coordination point for (2S)-2-hydroxy-3-oxobutyl phosphate.

Belongs to the DMRL synthase family. Forms an icosahedral capsid composed of 60 subunits, arranged as a dodecamer of pentamers.

It catalyses the reaction (2S)-2-hydroxy-3-oxobutyl phosphate + 5-amino-6-(D-ribitylamino)uracil = 6,7-dimethyl-8-(1-D-ribityl)lumazine + phosphate + 2 H2O + H(+). It participates in cofactor biosynthesis; riboflavin biosynthesis; riboflavin from 2-hydroxy-3-oxobutyl phosphate and 5-amino-6-(D-ribitylamino)uracil: step 1/2. Functionally, catalyzes the formation of 6,7-dimethyl-8-ribityllumazine by condensation of 5-amino-6-(D-ribitylamino)uracil with 3,4-dihydroxy-2-butanone 4-phosphate. This is the penultimate step in the biosynthesis of riboflavin. This chain is 6,7-dimethyl-8-ribityllumazine synthase, found in Halorhodospira halophila (strain DSM 244 / SL1) (Ectothiorhodospira halophila (strain DSM 244 / SL1)).